A 271-amino-acid polypeptide reads, in one-letter code: Bifunctional protein FolD (271 aa).

NADP(+)-binding positions include 154–156 (GRS), Ser181, and Ile222.

The protein belongs to the tetrahydrofolate dehydrogenase/cyclohydrolase family. In terms of assembly, homodimer.

The enzyme catalyses (6R)-5,10-methylene-5,6,7,8-tetrahydrofolate + NADP(+) = (6R)-5,10-methenyltetrahydrofolate + NADPH. The catalysed reaction is (6R)-5,10-methenyltetrahydrofolate + H2O = (6R)-10-formyltetrahydrofolate + H(+). The protein operates within one-carbon metabolism; tetrahydrofolate interconversion. Catalyzes the oxidation of 5,10-methylenetetrahydrofolate to 5,10-methenyltetrahydrofolate and then the hydrolysis of 5,10-methenyltetrahydrofolate to 10-formyltetrahydrofolate. This chain is Bifunctional protein FolD, found in Thermotoga sp. (strain RQ2).